A 397-amino-acid chain; its full sequence is Lysophospholipid transporter LplT (397 aa).

Over Met1–Lys17 the chain is Periplasmic. The chain crosses the membrane as a helical span at residues Ala18 to Leu38. Residues Ala39 to Pro52 are Cytoplasmic-facing. Residues Ile53 to Ala73 form a helical membrane-spanning segment. Residues Asp74–Leu90 lie on the Periplasmic side of the membrane. A helical membrane pass occupies residues Leu91–Val111. Topologically, residues Gly112–Thr144 are cytoplasmic. Residues Ile145–Val165 traverse the membrane as a helical segment. Ala166 is a topological domain (periplasmic). A helical transmembrane segment spans residues Leu167 to Leu187. The Cytoplasmic portion of the chain corresponds to Ala188–Ser226. A helical transmembrane segment spans residues Leu227–Leu247. At Gly248–Thr256 the chain is on the periplasmic side. Residues Tyr257 to Val277 form a helical membrane-spanning segment. Over Thr278 to Glu280 the chain is Cytoplasmic. Residues Thr281–Leu301 form a helical membrane-spanning segment. The Periplasmic segment spans residues Gln302–Glu304. The helical transmembrane segment at Leu305–Pro325 threads the bilayer. At Leu326 to Ala343 the chain is on the cytoplasmic side. The helical transmembrane segment at Ile344 to Leu364 threads the bilayer. Over Ala365–Val366 the chain is Periplasmic. A helical membrane pass occupies residues Met367–Ile387. Residues Thr388–His397 are Cytoplasmic-facing.

This sequence belongs to the major facilitator superfamily. LplT (TC 2.A.1.42) family.

It is found in the cell inner membrane. Catalyzes the facilitated diffusion of 2-acyl-glycero-3-phosphoethanolamine (2-acyl-GPE) into the cell. The protein is Lysophospholipid transporter LplT of Shigella dysenteriae serotype 1 (strain Sd197).